We begin with the raw amino-acid sequence, 625 residues long: MAHGCSGGAMSRFVFLGVALALLGGATSPAAAAPRVTPVVVDVDDYGADPTGRTDSTPAVAAALRHAKSVDRPVRIVFSKGTYQLYPERAETRELYMSNTVGADQRYRDKKIGLLVEDMHDVTVDGGGAKLVHHGLQTAFASIRSTDVTFQNFSFDYAAPEVIDATVATTGVTDGHAYRVLKIPAGSPYRVNGTHITWLGETSPATGQPYWSGVDGLQYTQIHDPEAQRTWRGDNPLFNDVAAVTDLGGRRIRIDYTTAARPADAGLVYQMRLIERTEPGAFIWESKNVTMRSMNAYYLQSFGVVGQFSENISIDKVNFAPDPRSGRSTASFADFVQMSGVKGKVSITRSLFDGPHDDPINIHGTYLEVVGKPGPSTLTLAYKHPQTAGFPQFAPGDEVEFATKRTMTPLADAHAQVTAVDGPSGMDHTKPLTTMTVTFDRPVPAGVETGGTVVENITATPSVVISGNVFRNVPTRGILVTTRKPVLITGNRFDGMSMASIYVSADAYQWYESGPVADLTIRGNSFTRPSGPVIFVEPTNQVIDPATPVHHNISVEHNSFDIGDVTVVNAKSVGGFAFTGNTVRRLDGADHPPYTSPLFVFHGSSGIRIARNHYDKGLNTSVVTD.

Residues 1 to 32 (MAHGCSGGAMSRFVFLGVALALLGGATSPAAA) form the signal peptide. PbH1 repeat units lie at residues 342–364 (KGKVSITRSLFDGPHDDPINIHG), 460–482 (TPSVVISGNVFRNVPTRGILVTT), 483–505 (RKPVLITGNRFDGMSMASIYVSA), 516–537 (VADLTIRGNSFTRPSGPVIFVE), and 573–611 (VGGFAFTGNTVRRLDGADHPPYTSPLFVFHGSSGIRIAR).

Belongs to the glycosyl hydrolase 110 family. A subfamily.

The enzyme catalyses Hydrolysis of terminal, non-reducing branched (1-&gt;3)-alpha-D-galactosidic residues, producing free D-galactose.. The catalysed reaction is Hydrolysis of terminal, non-reducing alpha-D-galactose residues in alpha-D-galactosides, including galactose oligosaccharides, galactomannans and galactolipids.. Alpha-galactosidase that specifically removes branched alpha-1,3-linked galactose residues present in blood group B antigens. Has no activity toward linear alpha-1,3-linked galactose residues. This Streptomyces avermitilis (strain ATCC 31267 / DSM 46492 / JCM 5070 / NBRC 14893 / NCIMB 12804 / NRRL 8165 / MA-4680) protein is Alpha-1,3-galactosidase A (glaA).